Consider the following 81-residue polypeptide: Cytotoxin 3a (81 aa).

The signal sequence occupies residues 1 to 21 (MKTLLLTLVVVTIVCLDLGYT). 4 cysteine pairs are disulfide-bonded: cysteine 24–cysteine 42, cysteine 35–cysteine 59, cysteine 63–cysteine 74, and cysteine 75–cysteine 80.

It belongs to the three-finger toxin family. Short-chain subfamily. Type IA cytotoxin sub-subfamily. In terms of assembly, monomer in solution; Homodimer and oligomer in the presence of negatively charged lipids forming a pore with a size ranging between 20 and 30 Angstroms. Expressed by the venom gland.

It localises to the secreted. Its subcellular location is the target cell membrane. In terms of biological role, shows cytolytic activity on many different cells by forming pore in lipid membranes. In vivo, increases heart rate or kills the animal by cardiac arrest. In addition, it binds to heparin with high affinity, interacts with Kv channel-interacting protein 1 (KCNIP1) in a calcium-independent manner, and binds to integrin alpha-V/beta-3 (ITGAV/ITGB3) with moderate affinity. This Naja atra (Chinese cobra) protein is Cytotoxin 3a.